Reading from the N-terminus, the 338-residue chain is D-erythrose-4-phosphate dehydrogenase (338 aa).

Arg12–Ile13 is an NAD(+) binding site. Substrate-binding positions include Ser154–Thr156, Arg200, Thr213–Lys214, and Arg236. Cys155 serves as the catalytic Nucleophile. Asn318 provides a ligand contact to NAD(+).

Belongs to the glyceraldehyde-3-phosphate dehydrogenase family. Epd subfamily. In terms of assembly, homotetramer.

Its subcellular location is the cytoplasm. The catalysed reaction is D-erythrose 4-phosphate + NAD(+) + H2O = 4-phospho-D-erythronate + NADH + 2 H(+). The protein operates within cofactor biosynthesis; pyridoxine 5'-phosphate biosynthesis; pyridoxine 5'-phosphate from D-erythrose 4-phosphate: step 1/5. Catalyzes the NAD-dependent conversion of D-erythrose 4-phosphate to 4-phosphoerythronate. This chain is D-erythrose-4-phosphate dehydrogenase, found in Yersinia enterocolitica serotype O:8 / biotype 1B (strain NCTC 13174 / 8081).